A 367-amino-acid chain; its full sequence is Centromere protein L (367 aa).

Belongs to the CENP-L/IML3 family.

It is found in the nucleus. Its subcellular location is the chromosome. The protein localises to the centromere. Probable component of a centromeric complex involved in assembly of kinetochore proteins, mitotic progression and chromosome segregation. The polypeptide is Centromere protein L (cenpl) (Danio rerio (Zebrafish)).